Consider the following 542-residue polypeptide: Cytochrome P450 monooxygenase TRI1 (542 aa).

Residues 37 to 54 (LIYFLCFVVLGRAVQWFL) form a helical membrane-spanning segment. N-linked (GlcNAc...) asparagine glycosylation is found at Asn-167, Asn-297, and Asn-428. Position 469 (Cys-469) interacts with heme.

This sequence belongs to the cytochrome P450 family. The cofactor is heme.

The protein localises to the membrane. It participates in sesquiterpene biosynthesis; trichothecene biosynthesis. Functionally, cytochrome P450 monooxygenase; part of 2-gene cluster involved in trichothecene C-8 modification that mediates the biosynthesis of T2-toxin. The biosynthesis of trichothecenes begins with the cyclization of farnesyl diphosphate to trichodiene and is catalyzed by the trichodiene synthase TRI5. Trichodiene undergoes a series of oxygenations catalyzed by the cytochrome P450 monooxygenase TRI4. TRI4 controls the addition of four oxygens at C-2, C-3, C-11, and the C-12, C-13-epoxide to form the intermediate isotrichotriol. Isotrichotriol then undergoes a non-enzymatic isomerization and cyclization to form isotrichodermol. During this process, the oxygen at the C-2 position becomes the pyran ring oxygen and the hydroxyl group at C-11 is lost. More complex type A trichothecenes are built by modifying isotrichodermol through a series of paired hydroxylation and acetylation or acylation steps. Isotrichodermol is converted to isotrichodermin by the acetyltransferase TRI101. TRI101 encodes a C-3 transacetylase that acts as a self-protection or resistance factor during biosynthesis and that the presence of a free C-3 hydroxyl group is a key component of Fusarium trichothecene phytotoxicity. A second hydroxyl group is added to C-15 by the trichothecene C-15 hydroxylase TRI11, producing 15-decalonectrin, which is then acetylated by TRI3, producing calonectrin. A third hydroxyl group is added at C-4 by the cytochrome P450 monooxygenase TRI13, converting calonectrin to 3,15-diacetoxyspirpenol, which is subsequently acetylated by the acetyltransferase TRI7. A fourth hydroxyl group is added to C-8 by the cytochrome P450 monooxygenase TRI1, followed by the addition of an isovaleryl moiety by TRI16. Finally, the acetyl group is removed from the C-3 position by the trichothecene C-3 esterase TRI8 to produce T-2 toxin. In Fusarium sporotrichioides, this protein is Cytochrome P450 monooxygenase TRI1.